The primary structure comprises 333 residues: Protoheme IX farnesyltransferase (333 aa).

8 consecutive transmembrane segments (helical) span residues 31–51 (VMSL…APIH), 52–72 (PVLA…SGAL), 115–135 (MFLG…TIVF), 152–172 (IVIG…AATG), 178–198 (AWLM…ALSL), 223–243 (KQIL…VLTG), 244–264 (LGGP…LLLA), and 303–323 (LFAF…GEAV).

Belongs to the UbiA prenyltransferase family. Protoheme IX farnesyltransferase subfamily.

Its subcellular location is the cell inner membrane. The enzyme catalyses heme b + (2E,6E)-farnesyl diphosphate + H2O = Fe(II)-heme o + diphosphate. The protein operates within porphyrin-containing compound metabolism; heme O biosynthesis; heme O from protoheme: step 1/1. In terms of biological role, converts heme B (protoheme IX) to heme O by substitution of the vinyl group on carbon 2 of heme B porphyrin ring with a hydroxyethyl farnesyl side group. This chain is Protoheme IX farnesyltransferase, found in Caulobacter vibrioides (strain ATCC 19089 / CIP 103742 / CB 15) (Caulobacter crescentus).